The primary structure comprises 565 residues: MKANLLVLLCALAAADADTICIGYHANNSTDTVDTVLEKNVTVTHSVNLLEDSHNGKLCRLKGIAPLQLGKCNIAGWLLGNPECDPLLPVRSWSYIVETPNSENGICYPGDFIDYEELREQLSSVSSFERFEIFPKESSWPNHNTNGVTAACSHEGKSSFYRNLLWLTEKEGSYPKLKNSYVNKKGKEVLVLWGIHHPPNSKEQQNLYQNENAYVSVVTSNYNRRFTPEIAERPKVRDQAGRMNYYWTLLKPGDTIIFEANGNLIAPMYAFALSRGFGSGIITSNASMHECNTKCQTPLGAINSSLPYQNIHPVTIGECPKYVRSAKLRMVTGLRNIPSIQSRGLFGAIAGFIEGGWTGMIDGWYGYHHQNEQGSGYAADQKSTQNAINGITNKVNTVIEKMNIQFTAVGKEFNKLEKRMENLNKKVDDGFLDIWTYNAELLVLLENERTLDFHDSNVKNLYEKVKSQLKNNAKEIGNGCFEFYHKCDNECMESVRNGTYDYPKYSEESKLNREKVDGVKLESMGIYQILAIYSTVASSLVLLVSLGAISFWMCSNGSLQCRICI.

Positions 1–17 are cleaved as a signal peptide; sequence MKANLLVLLCALAAADA. At 18–528 the chain is on the extracellular side; that stretch reads DTICIGYHAN…VKLESMGIYQ (511 aa). 6 disulfides stabilise this stretch: cysteine 21/cysteine 480, cysteine 59/cysteine 291, cysteine 72/cysteine 84, cysteine 107/cysteine 152, cysteine 295/cysteine 319, and cysteine 487/cysteine 491. Asparagine 27, asparagine 28, and asparagine 40 each carry an N-linked (GlcNAc...) asparagine; by host glycan. N-linked (GlcNAc...) asparagine; by host glycans are attached at residues asparagine 285 and asparagine 303. The N-linked (GlcNAc...) asparagine; by host glycan is linked to asparagine 497. A helical transmembrane segment spans residues 529–549; that stretch reads ILAIYSTVASSLVLLVSLGAI. The Cytoplasmic segment spans residues 550–565; it reads SFWMCSNGSLQCRICI. 3 S-palmitoyl cysteine; by host lipidation sites follow: cysteine 554, cysteine 561, and cysteine 564.

Belongs to the influenza viruses hemagglutinin family. Homotrimer of disulfide-linked HA1-HA2. Interacts with human CACNA1C. Palmitoylated. In terms of processing, in natural infection, inactive HA is matured into HA1 and HA2 outside the cell by one or more trypsin-like, arginine-specific endoprotease secreted by the bronchial epithelial cells. One identified protease that may be involved in this process is secreted in lungs by club cells.

It localises to the virion membrane. The protein localises to the host apical cell membrane. Binds to sialic acid-containing receptors on the cell surface, bringing about the attachment of the virus particle to the cell. This attachment induces virion internalization either through clathrin-dependent endocytosis or through clathrin- and caveolin-independent pathway. Plays a major role in the determination of host range restriction and virulence. Class I viral fusion protein. Responsible for penetration of the virus into the cell cytoplasm by mediating the fusion of the membrane of the endocytosed virus particle with the endosomal membrane. Low pH in endosomes induces an irreversible conformational change in HA2, releasing the fusion hydrophobic peptide. Several trimers are required to form a competent fusion pore. The polypeptide is Hemagglutinin (Aves (Human)).